Here is a 300-residue protein sequence, read N- to C-terminus: uncharacterized protein (300 aa).

A run of 10 helical transmembrane segments spans residues 4–24 (IIII…WIAM), 31–51 (IPPF…LIIL), 68–88 (FQIF…LYGG), 95–115 (ISSI…HFYL), 120–140 (NFIQ…VLLI), 146–166 (CFFQ…HAVI), 177–197 (VSVI…LSII), 214–234 (ILAV…SYFY), 242–262 (FYAS…EIYI), and 272–292 (LWFI…INFF). 2 consecutive EamA domains span residues 15 to 139 (ITWG…FVLL) and 161 to 287 (LSHA…LTLI).

The protein belongs to the EamA transporter family.

The protein localises to the cell membrane. This is an uncharacterized protein from Buchnera aphidicola subsp. Schizaphis graminum (strain Sg).